The chain runs to 688 residues: Elongation factor G (688 aa).

One can recognise a tr-type G domain in the interval 8 to 282 (KNFRNFGIMA…AVVDFLPSPV (275 aa)). Residues 17-24 (AHIDAGKT), 81-85 (DTPGH), and 135-138 (NKMD) contribute to the GTP site.

This sequence belongs to the TRAFAC class translation factor GTPase superfamily. Classic translation factor GTPase family. EF-G/EF-2 subfamily.

The protein resides in the cytoplasm. Catalyzes the GTP-dependent ribosomal translocation step during translation elongation. During this step, the ribosome changes from the pre-translocational (PRE) to the post-translocational (POST) state as the newly formed A-site-bound peptidyl-tRNA and P-site-bound deacylated tRNA move to the P and E sites, respectively. Catalyzes the coordinated movement of the two tRNA molecules, the mRNA and conformational changes in the ribosome. This is Elongation factor G (fusA) from Mycoplasma genitalium (strain ATCC 33530 / DSM 19775 / NCTC 10195 / G37) (Mycoplasmoides genitalium).